Consider the following 309-residue polypeptide: Uricase-2 isozyme 1 (309 aa).

Residues Lys18 and Thr64 each act as charge relay system in the active site. Residues Thr64, Asp65, Phe166, Arg183, Val238, Gln239, and Asn265 each coordinate urate. The active-site Charge relay system is His267. Positions 307–309 match the Microbody targeting signal motif; that stretch reads SKL.

This sequence belongs to the uricase family. In terms of assembly, homotetramer. In terms of processing, the N-terminus is blocked. Expressed predominantly in the uninfected cells of the central tissue of the root nodule.

The protein localises to the peroxisome. It carries out the reaction urate + O2 + H2O = 5-hydroxyisourate + H2O2. The protein operates within purine metabolism; urate degradation; (S)-allantoin from urate: step 1/3. Functionally, catalyzes the oxidation of uric acid to 5-hydroxyisourate, which is further processed to form (S)-allantoin. The polypeptide is Uricase-2 isozyme 1 (Glycine max (Soybean)).